A 966-amino-acid chain; its full sequence is Next to BRCA1 gene 1 protein (966 aa).

A PB1 domain is found at 4–85 (QVTLNVTFKN…NQLQMQVHEG (82 aa)). Ser-116 bears the Phosphoserine mark. A ZZ-type zinc finger spans residues 212 to 264 (SWHIACNNCQRRIVGVRYQCSLCPSYNICEDCEAGPYGHDTNHVLLKLRRPVV). Zn(2+) contacts are provided by Cys-217, Cys-220, Cys-231, Cys-234, Cys-240, Cys-243, His-250, and His-254. The ATG8 family protein-binding stretch occupies residues 542–636 (ASERELYIPS…KRKAENIASV (95 aa)). Position 586 is a phosphothreonine; by GSK3-alpha (Thr-586). Phosphoserine occurs at positions 590, 596, and 625. Residues 699–718 (EAVMEEEEDEEDEEEEDELK) are compositionally biased toward acidic residues. Disordered regions lie at residues 699–728 (EAVM…SSAS), 750–792 (MYSS…QPQE), and 848–879 (VPDQ…HHGS). Residues 727 to 738 (ASSEDYIIILPE) form an ATG8 family protein-binding region. In terms of domain architecture, UBA spans 913 to 957 (SEDQTAALMAHLFEMGFCDRQLNLRLLKKHNYNILQVVTELLQLN).

In terms of assembly, homooligomer and heterooligomer. Interacts with TRIM55. Interacts with titin/TTN. Interacts with RNF29, USP8, MAP1LC3A, MAP1LC3B, MAP1LC3C, GABARAP, GABARAPL1 and GABARAPL2. Binds to ubiquitin and ubiquitinated proteins. Interacts with SQSTM1. Interacts with TAX1BP1. Interacts with IRF3; this interaction mediates autophagic degradation of IRF3. Interacts with IL12A and IL12B. As to quaternary structure, (Microbial infection) Interacts with Influenza A virus protein PB1; this interaction promotes NBR1-mediated selective autophagic degradation of MAVS. In terms of processing, (Microbial infection) Cleaved by S.pyogenes SpeB protease; leading to its degradation. Degradation by SpeB prevents autophagy, promoting to S.pyogenes intracellular replication. Phosphorylated by GSK3A; this phosphorylation inhibits NBR1 involvement in the formation of ubiquitinated protein aggregates.

The protein localises to the cytoplasm. It is found in the cytoplasmic vesicle. It localises to the autophagosome. Its subcellular location is the lysosome. The protein resides in the myofibril. The protein localises to the sarcomere. It is found in the m line. Its function is as follows. Ubiquitin-binding autophagy adapter that participates in different processes including host defense or intracellular homeostasis. Possesses a double function during the selective autophagy by acting as a shuttle bringing ubiquitinated proteins to autophagosomes and also by participating in the formation of protein aggregates. Plays a role in the regulation of the innate immune response by modulating type I interferon production and targeting ubiquitinated IRF3 for autophagic degradation. In response to oxidative stress, promotes an increase in SQSTM1 levels, phosphorylation, and body formation by preventing its autophagic degradation. In turn, activates the KEAP1-NRF2/NFE2L2 antioxidant pathway. Also plays non-autophagy role by mediating the shuttle of IL-12 to late endosome for subsequent secretion. The sequence is that of Next to BRCA1 gene 1 protein (NBR1) from Homo sapiens (Human).